A 1816-amino-acid chain; its full sequence is Laminin subunit alpha-4 (1816 aa).

The first 24 residues, 1–24 (MGWSTAWCSVLALWLLWCAVCSNA), serve as a signal peptide directing secretion. Serine 39 carries O-linked (Xyl...) (chondroitin sulfate) serine glycosylation. Cystine bridges form between cysteine 82/cysteine 91, cysteine 84/cysteine 98, cysteine 101/cysteine 110, cysteine 113/cysteine 129, cysteine 132/cysteine 146, cysteine 134/cysteine 155, cysteine 157/cysteine 166, cysteine 169/cysteine 184, cysteine 187/cysteine 202, cysteine 189/cysteine 209, cysteine 212/cysteine 221, and cysteine 224/cysteine 238. 3 consecutive Laminin EGF-like domains span residues 82–131 (CDCN…FCQP), 132–186 (CPCP…TCKK), and 187–240 (CDCS…NCAV). N-linked (GlcNAc...) asparagine glycosylation is present at asparagine 104. Residue asparagine 215 is glycosylated (N-linked (GlcNAc...) asparagine). The 15-residue stretch at 241-255 (CNCGGGPCDSVTGEC) folds into the Laminin EGF-like 4; truncated domain. Residues 256–825 (LEEGFEVPTG…AQTRSVASKI (570 aa)) are domain II and I. Residues asparagine 308, asparagine 333, asparagine 458, asparagine 550, asparagine 571, asparagine 574, asparagine 631, and asparagine 639 are each glycosylated (N-linked (GlcNAc...) asparagine). Residues 431–523 (THRELVDEEA…ERVKEQMEVV (93 aa)) adopt a coiled-coil conformation. The stretch at 556 to 604 (AEIDGAKNELQGKLSNLSNLSHDLVQEATDHAYNLQQEADELSRNLHSS) forms a coiled coil. Residues 655-717 (IIYHKDESDN…AVKQLQAAER (63 aa)) adopt a coiled-coil conformation. Positions 717–719 (RGD) match the Cell attachment site motif. N-linked (GlcNAc...) asparagine glycans are attached at residues asparagine 735, asparagine 751, asparagine 754, asparagine 780, and asparagine 803. Residues 770-799 (AVDSARDAVRNLTEVVPQLLDQLRTVEQKR) are a coiled coil. 3 consecutive Laminin G-like domains span residues 826-1030 (QVSM…SVPC), 1042-1222 (AASY…GYGC), and 1229-1397 (SRRA…LYEC). A disulfide bridge connects residues cysteine 1000 and cysteine 1030. The N-linked (GlcNAc...) asparagine glycan is linked to asparagine 1088. Cysteine 1196 and cysteine 1222 are joined by a disulfide. Residues asparagine 1283 and asparagine 1361 are each glycosylated (N-linked (GlcNAc...) asparagine). A disulfide bridge links cysteine 1365 with cysteine 1397. Basic residues predominate over residues 1409–1419 (KKGKNSSKPKT). The interval 1409–1433 (KKGKNSSKPKTNKQGEKSKDAPSWD) is disordered. Residues 1421–1430 (KQGEKSKDAP) show a composition bias toward basic and acidic residues. 2 Laminin G-like domains span residues 1462-1633 (AYQY…VTPC) and 1640-1813 (TGTY…INSC). 2 disulfide bridges follow: cysteine 1610/cysteine 1633 and cysteine 1785/cysteine 1813.

In terms of assembly, laminin is a complex glycoprotein, consisting of three different polypeptide chains (alpha, beta, gamma), which are bound to each other by disulfide bonds into a cross-shaped molecule comprising one long and three short arms with globules at each end. Alpha-4 is a subunit of laminin-8 (laminin-411), laminin-9 (laminin-421) and laminin-14 (laminin-423). In terms of tissue distribution, strongly expressed in peripheral nerves, cardiac muscle, fat, dermis, lung stroma, aortic endothelium, endocardium and endothelium of blood vessels in skin and brain.

It is found in the secreted. Its subcellular location is the extracellular space. It localises to the extracellular matrix. The protein localises to the basement membrane. Binding to cells via a high affinity receptor, laminin is thought to mediate the attachment, migration and organization of cells into tissues during embryonic development by interacting with other extracellular matrix components. The chain is Laminin subunit alpha-4 (Lama4) from Mus musculus (Mouse).